The chain runs to 466 residues: ATP synthase subunit beta (466 aa).

153-160 (GGAGVGKT) serves as a coordination point for ATP.

The protein belongs to the ATPase alpha/beta chains family. F-type ATPases have 2 components, CF(1) - the catalytic core - and CF(0) - the membrane proton channel. CF(1) has five subunits: alpha(3), beta(3), gamma(1), delta(1), epsilon(1). CF(0) has three main subunits: a(1), b(2) and c(9-12). The alpha and beta chains form an alternating ring which encloses part of the gamma chain. CF(1) is attached to CF(0) by a central stalk formed by the gamma and epsilon chains, while a peripheral stalk is formed by the delta and b chains.

The protein resides in the cell membrane. The enzyme catalyses ATP + H2O + 4 H(+)(in) = ADP + phosphate + 5 H(+)(out). Its function is as follows. Produces ATP from ADP in the presence of a proton gradient across the membrane. The catalytic sites are hosted primarily by the beta subunits. The protein is ATP synthase subunit beta of Oenococcus oeni (strain ATCC BAA-331 / PSU-1).